A 450-amino-acid chain; its full sequence is MAVHPIDYRYGSEEMRRVWEEENKLQKLLDVEAALARAHAKLGNIPEESARVISERANTKWVKLERVKEIEAEIHHDIMAVVKALSEVCGEHGKYVHLGATSNDIIDTANALLIKESLAIVEKDLKELRSILKELAKKHIDTVCIGRTHGQHAVPTTYGMKFALWLDEIQRHIERLQQLKDRVLVGKMRGAVGTAASFGDKAFEIEKLVMEDLGLKPARITNQIIQRDVYAELMFFLALVASTLDKMALEIRNLQRTEILEVSEPFGEKQVGSSTMPHKRNPIRTEKVCGLARVLYSNVIPALLNNPLWHERDLTNSSVERVILPESFVLLDEMLKVMKKVLKGLEFFPENIKRNLYLTKNLIMAEPLMLKLAEKGMGRQEAHELVRQLAMKAFKEGRDLLEVVRKNEEAMKYLTENDLEGLKPENYIGKAREIVENVVNYVEEMERRGL.

N(6)-(1,2-dicarboxyethyl)-AMP is bound by residues 9-10 (RY), 75-77 (HHD), and 101-102 (TS). Histidine 149 acts as the Proton donor/acceptor in catalysis. A N(6)-(1,2-dicarboxyethyl)-AMP-binding site is contributed by glutamine 223. Serine 273 functions as the Proton donor/acceptor in the catalytic mechanism. N(6)-(1,2-dicarboxyethyl)-AMP is bound by residues serine 274, 279 to 281 (KRN), and 318 to 322 (SVERV).

This sequence belongs to the lyase 1 family. Adenylosuccinate lyase subfamily. Homotetramer. Residues from neighboring subunits contribute catalytic and substrate-binding residues to each active site.

The enzyme catalyses N(6)-(1,2-dicarboxyethyl)-AMP = fumarate + AMP. It carries out the reaction (2S)-2-[5-amino-1-(5-phospho-beta-D-ribosyl)imidazole-4-carboxamido]succinate = 5-amino-1-(5-phospho-beta-D-ribosyl)imidazole-4-carboxamide + fumarate. It participates in purine metabolism; AMP biosynthesis via de novo pathway; AMP from IMP: step 2/2. The protein operates within purine metabolism; IMP biosynthesis via de novo pathway; 5-amino-1-(5-phospho-D-ribosyl)imidazole-4-carboxamide from 5-amino-1-(5-phospho-D-ribosyl)imidazole-4-carboxylate: step 2/2. Functionally, catalyzes two reactions in de novo purine nucleotide biosynthesis. Catalyzes the breakdown of 5-aminoimidazole- (N-succinylocarboxamide) ribotide (SAICAR or 2-[5-amino-1-(5-phospho-beta-D-ribosyl)imidazole-4-carboxamido]succinate) to 5-aminoimidazole-4-carboxamide ribotide (AICAR or 5-amino-1-(5-phospho-beta-D-ribosyl)imidazole-4-carboxamide) and fumarate, and of adenylosuccinate (ADS or N(6)-(1,2-dicarboxyethyl)-AMP) to adenosine monophosphate (AMP) and fumarate. This chain is Adenylosuccinate lyase (purB), found in Pyrococcus abyssi (strain GE5 / Orsay).